Here is a 61-residue protein sequence, read N- to C-terminus: MAKKSLKVKQQCHPKFKVRGYTRCGNCGRPHAVLHKFDLCRLCFRNLASKGQIPGVRKASW.

Zn(2+) contacts are provided by C24, C27, C40, and C43.

The protein belongs to the universal ribosomal protein uS14 family. Zinc-binding uS14 subfamily. Part of the 30S ribosomal subunit. Contacts proteins S3 and S10. Zn(2+) serves as cofactor.

Binds 16S rRNA, required for the assembly of 30S particles and may also be responsible for determining the conformation of the 16S rRNA at the A site. The protein is Small ribosomal subunit protein uS14 of Spiroplasma citri.